The primary structure comprises 157 residues: Transcription elongation factor GreA (157 aa).

This sequence belongs to the GreA/GreB family.

In terms of biological role, necessary for efficient RNA polymerase transcription elongation past template-encoded arresting sites. The arresting sites in DNA have the property of trapping a certain fraction of elongating RNA polymerases that pass through, resulting in locked ternary complexes. Cleavage of the nascent transcript by cleavage factors such as GreA or GreB allows the resumption of elongation from the new 3'terminus. GreA releases sequences of 2 to 3 nucleotides. The sequence is that of Transcription elongation factor GreA from Hyphomonas neptunium (strain ATCC 15444).